Consider the following 301-residue polypeptide: MKIAVLSRNPRLYSTRRLVEAGEQRGHEVVVIDTLRAYMNIASHKPQIHYRGKPLEGFDAVIPRIGASVTFYGCAVLRQFEMQGVFPLNESVAIARSRDKLRALQLLSRRGVGLPVTGFAHSPDDIPDLIRMVNGAPLVIKVLEGTQGIGVVLCETEKAAESVIEAFMGLKQDIMVQEYIKEAGGADIRCFVVGDKVIAAMKRQAKPGEFRSNLHRGGSASLIKITPEERMTAIRAAKVMGLNVAGVDILRSNHGPLVMEVNSSPGLAGIEETTGKDVAGLIIQYLEKNGGPHLTRTKGKG.

Positions 104–287 (LQLLSRRGVG…VAGLIIQYLE (184 aa)) constitute an ATP-grasp domain. ATP-binding positions include lysine 141, 178–179 (EY), aspartate 187, and 211–213 (RSN). Mg(2+)-binding residues include aspartate 248, glutamate 260, and asparagine 262. Mn(2+) is bound by residues aspartate 248, glutamate 260, and asparagine 262.

It belongs to the RimK family. Mg(2+) is required as a cofactor. It depends on Mn(2+) as a cofactor.

The polypeptide is Probable alpha-L-glutamate ligase (Stutzerimonas stutzeri (strain A1501) (Pseudomonas stutzeri)).